We begin with the raw amino-acid sequence, 481 residues long: uncharacterized protein (481 aa).

Transmembrane regions (helical) follow at residues 32-52 (LSWL…YWGV), 82-102 (FFHW…IMAY), 137-157 (MFLI…AATF), 173-193 (VQAF…WIGI), 204-224 (VGWG…TEFI), 258-278 (WTVF…MFVT), 289-309 (VIWG…GVME), 348-368 (LFLA…MDAV), 392-412 (LFWC…GASL), and 418-438 (TVVL…GGFI).

Belongs to the BCCT transporter (TC 2.A.15) family.

It localises to the cell inner membrane. Functionally, probable transporter whose substrate is unknown. Is not involved in aerobic D-malate transport. This is an uncharacterized protein from Escherichia coli (strain K12).